The following is a 766-amino-acid chain: ATP-dependent RNA helicase DBP4 (766 aa).

Positions 1 to 18 (MGKKQNNRKVVKSQRKSH) are enriched in basic residues. The interval 1-25 (MGKKQNNRKVVKSQRKSHREKEEET) is disordered. Residues 46–74 (SQFSDLPISEETARGLKEASFASLTDIQK) carry the Q motif motif. In terms of domain architecture, Helicase ATP-binding spans 77–251 (IPISLKGEDV…RLSLANPKRV (175 aa)). Residue 90 to 97 (AKTGSGKT) participates in ATP binding. A DEAD box motif is present at residues 199-202 (DEAD). The 173-residue stretch at 265–437 (SLEQYYIKIP…TIRPQLQSLC (173 aa)) folds into the Helicase C-terminal domain. 3 disordered regions span residues 488-525 (KIKF…EEDK), 572-614 (KRQD…ANKL), and 649-752 (NKET…EPQT). Composition is skewed to basic and acidic residues over residues 493–502 (GGSDNKEKKN), 572–581 (KRQDHELRDD), 660–671 (IEDKLTAKEKRQ), 678–687 (KEMEKNMRQE), and 709–738 (DRDL…NVNK). Positions 739–752 (DEDDGVVEYDEPQT) are enriched in acidic residues.

Belongs to the DEAD box helicase family. DDX10/DBP4 subfamily. Interacts with the U3 and U14 snoRNAs. Associates with pre-ribosomal complexes.

Its subcellular location is the nucleus. It localises to the nucleolus. It carries out the reaction ATP + H2O = ADP + phosphate + H(+). Functionally, ATP-dependent RNA helicase required for ribosome biogenesis. Involved in the release of U14 snoRNA in pre-ribosomal complexes. Required for pre-rRNA cleavage at site A2. The protein is ATP-dependent RNA helicase DBP4 (DBP4) of Debaryomyces hansenii (strain ATCC 36239 / CBS 767 / BCRC 21394 / JCM 1990 / NBRC 0083 / IGC 2968) (Yeast).